A 203-amino-acid chain; its full sequence is Undecaprenyl phosphate transporter A (203 aa).

Helical transmembrane passes span 16 to 36, 48 to 68, 108 to 128, 137 to 157, and 173 to 193; these read AIFI…EIIL, LSIL…LLIL, YGVW…LITI, VVTF…GLIL, and LHTY…YFAI.

This sequence belongs to the DedA family.

It localises to the cell membrane. Functionally, flippase that catalyzes the transport of undecaprenyl phosphate (UndP) across the cytoplasmic membrane, from the external side to the cytoplasmic side. Is involved in UndP recycling during peptidoglycan synthesis. The protein is Undecaprenyl phosphate transporter A of Staphylococcus aureus (strain NCTC 8325 / PS 47).